The primary structure comprises 209 residues: Kynurenine formamidase (209 aa).

Position 18 (tryptophan 18) interacts with substrate. 3 residues coordinate Zn(2+): histidine 48, histidine 52, and aspartate 54. Histidine 58 acts as the Proton donor/acceptor in catalysis. Zn(2+) is bound by residues histidine 160 and glutamate 172.

This sequence belongs to the Cyclase 1 superfamily. KynB family. As to quaternary structure, homodimer. Zn(2+) is required as a cofactor.

It carries out the reaction N-formyl-L-kynurenine + H2O = L-kynurenine + formate + H(+). Its pathway is amino-acid degradation; L-tryptophan degradation via kynurenine pathway; L-kynurenine from L-tryptophan: step 2/2. Functionally, catalyzes the hydrolysis of N-formyl-L-kynurenine to L-kynurenine, the second step in the kynurenine pathway of tryptophan degradation. The chain is Kynurenine formamidase from Sphingopyxis alaskensis (strain DSM 13593 / LMG 18877 / RB2256) (Sphingomonas alaskensis).